A 369-amino-acid polypeptide reads, in one-letter code: Cobalamin-binding protein (369 aa).

An N-terminal signal peptide occupies residues 1-24 (MHRGRFATLVIVALAVTMTAPAGA). The Fe/B12 periplasmic-binding domain maps to 62 to 319 (RVVTLNPSAA…RMANAFHNTT (258 aa)). A disordered region spans residues 322–343 (TTLDAQPSATTTATSTAPPTDA). The span at 328–343 (PSATTTATSTAPPTDA) shows a compositional bias: low complexity.

The complex is composed of two ATP-binding proteins (BtuD), two transmembrane proteins (BtuC) and a solute-binding protein (BtuF).

Required for corrinoid utilization. Probably part of the ABC transporter complex BtuCDF involved in cobalamin (vitamin B12) import. Probably binds cobalamin and delivers it to the surface of BtuC. The protein is Cobalamin-binding protein (btuF) of Halobacterium salinarum (strain ATCC 29341 / DSM 671 / R1).